The primary structure comprises 92 residues: Small ribosomal subunit protein uS19 (92 aa).

Belongs to the universal ribosomal protein uS19 family.

Protein S19 forms a complex with S13 that binds strongly to the 16S ribosomal RNA. The polypeptide is Small ribosomal subunit protein uS19 (Rippkaea orientalis (strain PCC 8801 / RF-1) (Cyanothece sp. (strain PCC 8801))).